The chain runs to 460 residues: WD repeat-containing protein 41 (460 aa).

WD repeat units follow at residues 40–79 (EAHR…KLLE), 82–128 (GHTQ…QIQR), 131–168 (CFQS…LCKT), 220–258 (DHQD…VQAC), 321–359 (AHDS…QLAA), and 403–441 (GHSS…SGVR).

Component of the C9orf72-SMCR8 complex, at least composed of C9orf72, SMCR8 and WDR41. The complex is formed of two protomers, each individually consisting of one molecule each of C9orf72, SMCR8 and WDR41. The protomers homodimerize via an interaction between C9orf72 (via C-terminus) and SMCR8 (via N-terminus). Within each protomer SMCR8 (via DENN domain) acts as a bridging protein between WDR41 (via C-terminus and N-terminus) and C9orf72 (via C-terminus). The C9orf72-SMCR8 complex associates with the ULK1/ATG1 kinase complex.

The protein localises to the cytoplasm. In terms of biological role, non-catalytic component of the C9orf72-SMCR8 complex, a complex that has guanine nucleotide exchange factor (GEF) activity and regulates autophagy. The C9orf72-SMCR8 complex promotes the exchange of GDP to GTP, converting inactive GDP-bound RAB8A and RAB39B into their active GTP-bound form, thereby promoting autophagosome maturation. As part of the C9orf72-SMCR8 complex, stimulates RAB8A and RAB11A GTPase activity in vitro, however WDR42 is shown not be an essential complex component for this function. The C9orf72-SMCR8 complex also acts as a negative regulator of autophagy initiation by interacting with the ULK1/ATG1 kinase complex and inhibiting its protein kinase activity. This chain is WD repeat-containing protein 41, found in Mus musculus (Mouse).